Reading from the N-terminus, the 417-residue chain is D-amino acid dehydrogenase (417 aa).

FAD is bound at residue 3–17 (AVVLGSGVVGLMSAW).

Belongs to the DadA oxidoreductase family. FAD is required as a cofactor.

It carries out the reaction a D-alpha-amino acid + A + H2O = a 2-oxocarboxylate + AH2 + NH4(+). Oxidative deamination of D-amino acids. This chain is D-amino acid dehydrogenase, found in Vibrio vulnificus (strain CMCP6).